A 96-amino-acid chain; its full sequence is MHVTLVEINVHEDKVDEFIEVFRQNHLGSVQEEGNLRFDVLQDPEVNSRFYIYEAYKDEDAVAFHKTTPHYKTCVAKLESLMTGPRKKRLFNGLMP.

Residues 2–91 (HVTLVEINVH…MTGPRKKRLF (90 aa)) enclose the ABM domain.

This sequence belongs to the LsrG family. Homodimer.

It localises to the cytoplasm. The enzyme catalyses (2S)-2-hydroxy-3,4-dioxopentyl phosphate = 3-hydroxy-2,4-dioxopentyl phosphate. Functionally, involved in the degradation of phospho-AI-2, thereby terminating induction of the lsr operon and closing the AI-2 signaling cycle. Catalyzes the conversion of (4S)-4-hydroxy-5-phosphonooxypentane-2,3-dione (P-DPD) to 3-hydroxy-5-phosphonooxypentane-2,4-dione (P-HPD). The sequence is that of (4S)-4-hydroxy-5-phosphonooxypentane-2,3-dione isomerase from Escherichia coli O157:H7.